The following is a 1063-amino-acid chain: Kinesin-like protein KIN-7H (1063 aa).

The Kinesin motor domain maps to 18–342; that stretch reads KIYVSVRMRP…LLFASCAKEV (325 aa). An ATP-binding site is contributed by 106 to 113; the sequence is GQTSSGKT. Residues 351-436 adopt a coiled-coil conformation; sequence VMSDKALVKH…KNQEKETLST (86 aa). The interval 574–664 is disordered; sequence SDISIGPVEN…ESNLTKNPAL (91 aa).

It belongs to the TRAFAC class myosin-kinesin ATPase superfamily. Kinesin family. KIN-7 subfamily.

In Arabidopsis thaliana (Mouse-ear cress), this protein is Kinesin-like protein KIN-7H.